The sequence spans 177 residues: Thaumatin-like protein (177 aa).

The first 26 residues, 1–26 (MASPATSSAVLVVVLVATLAAGGANA), serve as a signal peptide directing secretion.

Belongs to the thaumatin family.

The protein localises to the secreted. The protein is Thaumatin-like protein of Oryza sativa subsp. japonica (Rice).